The primary structure comprises 767 residues: Cilia- and flagella-associated protein 91 (767 aa).

A disordered region spans residues 1 to 29 (MSHAVTIEEPQAQPQVSQTRYRERSRAGS).

Belongs to the CFAP91 family. As to quaternary structure, interacts with MYCBP and AKAP1. Part of a complex containing MYCBP, AKAP1 and PRKAR2B. Interacts with CFAP61. In terms of assembly, does not interact with MYCBP. In terms of processing, phosphorylated by PKA. Strongly expressed in the liver. As to expression, widely expressed, but strongly expressed in all spermatogenesis-related tissues, including the testis, the epithelium of cauda and the corpus epididymis, as well as the spermatid and mature sperm. Also expressed in Leydig cells.

It is found in the mitochondrion. Its subcellular location is the cytoplasm. The protein resides in the cytoskeleton. It localises to the cilium axoneme. Involved in sperm flagellum axonemal organization and function. May regulate cilium motility through its role in the assembly of the axonemal radial spokes. This chain is Cilia- and flagella-associated protein 91, found in Homo sapiens (Human).